Reading from the N-terminus, the 335-residue chain is MSLDINQIALHQLIKRDEQNLELVLRDSLLEPTETVVEMVAELHRVYSAKNKAYGLFSEESELAQTLRLQRQGEEDFLAFSRAATGRLRDELAKYPFADGGFVLFCHYRYLAVEYLLVAVLSNLSSMRVNENLDINPTHYLDINHADIVARIDLTEWETNPESTRYLTFLKGRVGRKVADFFMDFLGASEGLNAKAQNRGLLQAVDDFTAEAQLDKAERQNVRQQVYSYCNEQLQAGEEIELKSLSKELAGVSEVSFTEFAAEKGYELEESFPADRSTLRQLTKFAGSGGGLTINFDAMLLGERIFWDPATDTLTIKGTPPNLRDQLQRRTSGGN.

This sequence belongs to the YejK family.

The protein localises to the cytoplasm. The protein resides in the nucleoid. The polypeptide is Nucleoid-associated protein YejK (Escherichia coli (strain K12 / MC4100 / BW2952)).